We begin with the raw amino-acid sequence, 170 residues long: Peptide deformylase (170 aa).

Fe cation contacts are provided by Cys91 and His133. Glu134 is a catalytic residue. His137 provides a ligand contact to Fe cation.

It belongs to the polypeptide deformylase family. Fe(2+) is required as a cofactor.

It carries out the reaction N-terminal N-formyl-L-methionyl-[peptide] + H2O = N-terminal L-methionyl-[peptide] + formate. Functionally, removes the formyl group from the N-terminal Met of newly synthesized proteins. Requires at least a dipeptide for an efficient rate of reaction. N-terminal L-methionine is a prerequisite for activity but the enzyme has broad specificity at other positions. The protein is Peptide deformylase of Histophilus somni (strain 129Pt) (Haemophilus somnus).